The following is a 388-amino-acid chain: MREYAVFTSESVSEGHPDKMADQISDAILDAILKEDPYARVACETLVKTGAVVLAGEITTTANVDFEAIVRQTVNGIGYHHSDLGFDGSTCAIINMIGKQSPEIAQGVDRQKPEDQGAGDQGLMFGYASRETDVLMPAPISYAHRLMERQAELRRSGALPWLRPDAKSQVTFAYENGMPVRLDAVVLSTQHDPEISQAQLKEAVIEEIVKPVIPSEMFHAGTKFHINPTGMFVIGGPVGDCGLTGRKIIVDTYGGMARHGGGAFSGKDPSKVDRSAAYAGRYVAKNIVAAGLADKCEIQVSYAIGVAEPTSISINTFNTAKVDEELIIALVREHFDLRPYGITRMLDLLQPMYKQTAAYGHFGREGSDTAFTWEKTDKVEVLKDAAGL.

Histidine 16 serves as a coordination point for ATP. Aspartate 18 provides a ligand contact to Mg(2+). Glutamate 44 lines the K(+) pocket. L-methionine is bound by residues glutamate 57 and glutamine 100. Positions 100 to 110 (QSPEIAQGVDR) are flexible loop. Residues 165-167 (DAK), aspartate 240, 246-247 (RK), alanine 263, and lysine 267 contribute to the ATP site. Aspartate 240 is an L-methionine binding site. Residue lysine 271 participates in L-methionine binding.

Belongs to the AdoMet synthase family. As to quaternary structure, homotetramer; dimer of dimers. Mg(2+) is required as a cofactor. The cofactor is K(+).

The protein resides in the cytoplasm. The enzyme catalyses L-methionine + ATP + H2O = S-adenosyl-L-methionine + phosphate + diphosphate. It participates in amino-acid biosynthesis; S-adenosyl-L-methionine biosynthesis; S-adenosyl-L-methionine from L-methionine: step 1/1. Its function is as follows. Catalyzes the formation of S-adenosylmethionine (AdoMet) from methionine and ATP. The overall synthetic reaction is composed of two sequential steps, AdoMet formation and the subsequent tripolyphosphate hydrolysis which occurs prior to release of AdoMet from the enzyme. The polypeptide is S-adenosylmethionine synthase (Acinetobacter baylyi (strain ATCC 33305 / BD413 / ADP1)).